Consider the following 301-residue polypeptide: NADH-cytochrome b5 reductase 3 (301 aa).

A lipid anchor (N-myristoyl glycine) is attached at glycine 2. Positions 40-152 (DIKYPLRLID…RGPSGLLVYQ (113 aa)) constitute an FAD-binding FR-type domain. Lysine 42 bears the N6-acetyllysine mark. Tyrosine 43 is modified (phosphotyrosine). Residues arginine 92, proline 93, tyrosine 94, valine 109, lysine 111, and phenylalanine 114 each contribute to the FAD site. Residue lysine 120 is modified to N6-acetyllysine. FAD contacts are provided by lysine 126, methionine 127, serine 128, and threonine 185.

This sequence belongs to the flavoprotein pyridine nucleotide cytochrome reductase family. In terms of assembly, component of a complex composed of cytochrome b5, NADH-cytochrome b5 reductase (CYB5R3) and MTARC2. Interacts with MTLN; the interaction is required to maintain cellular lipid composition and leads to stimulation of mitochondrial respiratory complex I activity. FAD is required as a cofactor. In terms of tissue distribution, expressed at late stages of erythroid maturation.

It is found in the endoplasmic reticulum membrane. The protein localises to the mitochondrion outer membrane. It localises to the cytoplasm. The catalysed reaction is 2 Fe(III)-[cytochrome b5] + NADH = 2 Fe(II)-[cytochrome b5] + NAD(+) + H(+). In terms of biological role, catalyzes the reduction of two molecules of cytochrome b5 using NADH as the electron donor. The sequence is that of NADH-cytochrome b5 reductase 3 from Homo sapiens (Human).